We begin with the raw amino-acid sequence, 473 residues long: Photosystem II CP43 reaction center protein (473 aa).

A propeptide spanning residues 1-14 (MKILYSLRRFYHVE) is cleaved from the precursor. N-acetylthreonine is present on Thr-15. Thr-15 carries the post-translational modification Phosphothreonine. The next 5 membrane-spanning stretches (helical) occupy residues 69 to 93 (LFEVAHFVPEKPMYEQGLILLPHLA), 134 to 155 (LLGPETLEESFPFFGYVWKDRN), 178 to 200 (KALYFGGVYDTWAPGGGDVRKIT), 255 to 275 (KPFAWARRAFVWSGEAYLSYS), and 291 to 312 (WFNNTAYPSEFYGPTGPEASQA). Residue Glu-367 participates in [CaMn4O5] cluster binding. The chain crosses the membrane as a helical span at residues 447–471 (RARAAAAGFEKGIDRDLEPVLYMNP).

The protein belongs to the PsbB/PsbC family. PsbC subfamily. As to quaternary structure, PSII is composed of 1 copy each of membrane proteins PsbA, PsbB, PsbC, PsbD, PsbE, PsbF, PsbH, PsbI, PsbJ, PsbK, PsbL, PsbM, PsbT, PsbX, PsbY, PsbZ, Psb30/Ycf12, at least 3 peripheral proteins of the oxygen-evolving complex and a large number of cofactors. It forms dimeric complexes. The cofactor is Binds multiple chlorophylls and provides some of the ligands for the Ca-4Mn-5O cluster of the oxygen-evolving complex. It may also provide a ligand for a Cl- that is required for oxygen evolution. PSII binds additional chlorophylls, carotenoids and specific lipids..

The protein resides in the plastid. It localises to the chloroplast thylakoid membrane. One of the components of the core complex of photosystem II (PSII). It binds chlorophyll and helps catalyze the primary light-induced photochemical processes of PSII. PSII is a light-driven water:plastoquinone oxidoreductase, using light energy to abstract electrons from H(2)O, generating O(2) and a proton gradient subsequently used for ATP formation. The protein is Photosystem II CP43 reaction center protein of Lolium perenne (Perennial ryegrass).